The primary structure comprises 81 residues: UPF0248 protein TK0315 (81 aa).

Belongs to the UPF0248 family.

The protein is UPF0248 protein TK0315 of Thermococcus kodakarensis (strain ATCC BAA-918 / JCM 12380 / KOD1) (Pyrococcus kodakaraensis (strain KOD1)).